The primary structure comprises 228 residues: Aquaporin Z 1 (228 aa).

The next 2 membrane-spanning stretches (helical) occupy residues 9 to 29 and 34 to 54; these read FLGT…AAAF and IGLL…AYAV. An NPA 1 motif is present at residues 63–65; that stretch reads NPA. 3 helical membrane passes run 82–102, 129–149, and 156–176; these read VGYI…LYVI, LTAA…IILG, and PVGF…LVSI. The short motif at 184–186 is the NPA 2 element; it reads NPA. Residues 204–224 form a helical membrane-spanning segment; that stretch reads WLFWVAPLIGAVIAGIVWKIV.

This sequence belongs to the MIP/aquaporin (TC 1.A.8) family. Homotetramer.

It is found in the cell inner membrane. The catalysed reaction is H2O(in) = H2O(out). Functionally, channel that permits osmotically driven movement of water in both directions. It is involved in the osmoregulation and in the maintenance of cell turgor during volume expansion in rapidly growing cells. It mediates rapid entry or exit of water in response to abrupt changes in osmolarity. The protein is Aquaporin Z 1 of Rhizobium meliloti (strain 1021) (Ensifer meliloti).